A 576-amino-acid polypeptide reads, in one-letter code: Potassium-transporting ATPase potassium-binding subunit (576 aa).

Transmembrane regions (helical) follow at residues 4–24, 65–85, 136–156, 179–199, 257–277, 288–308, 341–361, 371–391, 393–413, 430–450, 497–517, and 540–560; these read QAWI…WPLG, AYAL…YALQ, ALGV…FALI, VYVL…QGVI, LSNF…VFAF, GALL…VTSL, FGIA…CGAV, LGGA…GGVG, GLYG…LMIG, MTAV…AVAL, LLLA…VLAI, and LFVV…YVPA.

Belongs to the KdpA family. The system is composed of three essential subunits: KdpA, KdpB and KdpC.

It localises to the cell inner membrane. Functionally, part of the high-affinity ATP-driven potassium transport (or Kdp) system, which catalyzes the hydrolysis of ATP coupled with the electrogenic transport of potassium into the cytoplasm. This subunit binds the periplasmic potassium ions and delivers the ions to the membrane domain of KdpB through an intramembrane tunnel. In Methylibium petroleiphilum (strain ATCC BAA-1232 / LMG 22953 / PM1), this protein is Potassium-transporting ATPase potassium-binding subunit.